The primary structure comprises 107 residues: Nucleoid-associated protein Pnec_0645 (107 aa).

Belongs to the YbaB/EbfC family. Homodimer.

Its subcellular location is the cytoplasm. It localises to the nucleoid. Binds to DNA and alters its conformation. May be involved in regulation of gene expression, nucleoid organization and DNA protection. The chain is Nucleoid-associated protein Pnec_0645 from Polynucleobacter necessarius subsp. necessarius (strain STIR1).